A 228-amino-acid chain; its full sequence is Uracil-DNA glycosylase (228 aa).

Asp-64 functions as the Proton acceptor in the catalytic mechanism.

This sequence belongs to the uracil-DNA glycosylase (UDG) superfamily. UNG family.

The protein localises to the cytoplasm. The catalysed reaction is Hydrolyzes single-stranded DNA or mismatched double-stranded DNA and polynucleotides, releasing free uracil.. Its function is as follows. Excises uracil residues from the DNA which can arise as a result of misincorporation of dUMP residues by DNA polymerase or due to deamination of cytosine. This Pectobacterium atrosepticum (strain SCRI 1043 / ATCC BAA-672) (Erwinia carotovora subsp. atroseptica) protein is Uracil-DNA glycosylase.